A 387-amino-acid polypeptide reads, in one-letter code: WD repeat-containing protein 55 (387 aa).

Over residues 1–10 the composition is skewed to basic and acidic residues; that stretch reads MATPTEHEDL. The interval 1–24 is disordered; that stretch reads MATPTEHEDLSEQEVTEDEFKTPK. WD repeat units follow at residues 33–72, 79–118, 122–160, 163–202, 205–244, 247–286, and 290–329; these read KLEA…GENK, HHLK…LETR, AHKV…SFMD, HHED…FELL, IQNG…ATSD, AVQA…VVGS, and HVGE…DEKV. Positions 356–387 are disordered; it reads FFAGLLDTTEENGKEGENDEDDDDEDSDSGSD. Residues 372 to 387 are compositionally biased toward acidic residues; sequence ENDEDDDDEDSDSGSD.

The protein belongs to the WD repeat WDR55 family.

It localises to the nucleus. It is found in the nucleolus. In terms of biological role, nucleolar protein that acts as a modulator of rRNA synthesis. Plays a central role during organogenesis. The chain is WD repeat-containing protein 55 (wdr55) from Danio rerio (Zebrafish).